A 251-amino-acid chain; its full sequence is Probable transcriptional regulatory protein Pmob_0807 (251 aa).

The interval 1 to 22 (MSGHNKWANIKHRKGAQDAKRS) is disordered.

It belongs to the TACO1 family.

It localises to the cytoplasm. The chain is Probable transcriptional regulatory protein Pmob_0807 from Petrotoga mobilis (strain DSM 10674 / SJ95).